The chain runs to 54 residues: Large ribosomal subunit protein bL32c (54 aa).

This sequence belongs to the bacterial ribosomal protein bL32 family.

The protein resides in the plastid. The protein localises to the chloroplast. The chain is Large ribosomal subunit protein bL32c from Gossypium barbadense (Sea Island cotton).